The chain runs to 258 residues: Methylthioribulose-1-phosphate dehydratase (258 aa).

Residues 1 to 21 (MCSPTTENNNNNNDHLVQSSD) are disordered. Residue C105 participates in substrate binding. Residues H123 and H125 each coordinate Zn(2+). E153 (proton donor/acceptor) is an active-site residue. Zn(2+) is bound at residue H210.

Belongs to the aldolase class II family. MtnB subfamily. Zn(2+) is required as a cofactor.

It localises to the cytoplasm. The catalysed reaction is 5-(methylsulfanyl)-D-ribulose 1-phosphate = 5-methylsulfanyl-2,3-dioxopentyl phosphate + H2O. Its pathway is amino-acid biosynthesis; L-methionine biosynthesis via salvage pathway; L-methionine from S-methyl-5-thio-alpha-D-ribose 1-phosphate: step 2/6. In terms of biological role, catalyzes the dehydration of methylthioribulose-1-phosphate (MTRu-1-P) into 2,3-diketo-5-methylthiopentyl-1-phosphate (DK-MTP-1-P). In Neurospora crassa (strain ATCC 24698 / 74-OR23-1A / CBS 708.71 / DSM 1257 / FGSC 987), this protein is Methylthioribulose-1-phosphate dehydratase.